The sequence spans 409 residues: Elongation factor Tu (409 aa).

One can recognise a tr-type G domain in the interval 10–214; it reads KPHLNIGTIG…AVDSFIPTPE (205 aa). The G1 stretch occupies residues 19-26; that stretch reads GHVDHGKT. 19–26 contacts GTP; the sequence is GHVDHGKT. T26 contributes to the Mg(2+) binding site. The interval 60-64 is G2; it reads GITIN. Residues 81–84 form a G3 region; the sequence is DCPG. Residues 81–85 and 136–139 each bind GTP; these read DCPGH and NKED. The segment at 136-139 is G4; that stretch reads NKED. Positions 174-176 are G5; the sequence is SGL.

The protein belongs to the TRAFAC class translation factor GTPase superfamily. Classic translation factor GTPase family. EF-Tu/EF-1A subfamily. Monomer.

It is found in the cytoplasm. It carries out the reaction GTP + H2O = GDP + phosphate + H(+). GTP hydrolase that promotes the GTP-dependent binding of aminoacyl-tRNA to the A-site of ribosomes during protein biosynthesis. The protein is Elongation factor Tu of Nostoc punctiforme (strain ATCC 29133 / PCC 73102).